A 378-amino-acid chain; its full sequence is uncharacterized protein (378 aa).

Positions 1-11 are enriched in basic residues; that stretch reads MSPMNRQRKNK. The interval 1 to 23 is disordered; it reads MSPMNRQRKNKSNVLNEKDERPG.

This is an uncharacterized protein from Caenorhabditis elegans.